The primary structure comprises 262 residues: E3 ubiquitin-protein ligase NEURL3 (262 aa).

Residues 17–173 (ALRFHAEAKG…TTKAIELLDP (157 aa)) form the NHR domain. An RING-type zinc finger spans residues 202 to 241 (CAICFYHAANTRLVPCGHTYFCRYCAWRVFSDTAKCPVCR).

In terms of assembly, (Microbial infection) Interacts with hepatitis C virus protein E1; this interaction prevents E1 interaction with E2 and subsequently inhibits viral infection.

The protein resides in the cytoplasm. It catalyses the reaction S-ubiquitinyl-[E2 ubiquitin-conjugating enzyme]-L-cysteine + [acceptor protein]-L-lysine = [E2 ubiquitin-conjugating enzyme]-L-cysteine + N(6)-ubiquitinyl-[acceptor protein]-L-lysine.. The protein operates within protein modification; protein ubiquitination. In terms of biological role, E3 ubiquitin-protein ligase that plays a role in various biological processes such as lung development or innate immunity. Seems to utilize UBE2E1. Promotes innate antiviral response by catalyzing 'Lys-63'-linked ubiquitination of IRF7. Also inhibits hepatitis C virus assembly by directly binding to viral E1 envelope glycoprotein to disrupt its interaction with E2. Plays an essential role in TLR4-mediated activation of MAPK pathways by promoting 'Lys-48'-linked polyubiquitination of the phosphatase DUSP1/MKP1. This chain is E3 ubiquitin-protein ligase NEURL3 (NEURL3), found in Homo sapiens (Human).